Consider the following 352-residue polypeptide: Isoflavone-7-O-methyltransferase 8 (352 aa).

118 to 127 (VLDPTLSGSY) is a binding site for substrate. Residues Gly-196, Asp-219, Asp-239, Met-240, and Lys-253 each contribute to the S-adenosyl-L-methionine site. His-257 acts as the Proton acceptor in catalysis.

Belongs to the class I-like SAM-binding methyltransferase superfamily. Cation-independent O-methyltransferase family. COMT subfamily. In terms of assembly, homodimer.

The enzyme catalyses a 7-hydroxyisoflavone + S-adenosyl-L-methionine = a 7-methoxyisoflavone + S-adenosyl-L-homocysteine + H(+). It participates in phytoalexin biosynthesis; medicarpin biosynthesis. Its function is as follows. Transfers a methyl group to 7-hydroxyls of the isoflavones daidzein, genistein and 6,7,4'-trihydroxyisoflavone. Can also methylate (+)6a-hydroxymaackiain with lower efficiency. This is Isoflavone-7-O-methyltransferase 8 from Medicago sativa (Alfalfa).